Reading from the N-terminus, the 360-residue chain is uncharacterized protein (360 aa).

The disordered stretch occupies residues 193–245 (SRHTRPKGQPLSSPKKNSGSAARPSTAIGLCRRSQTPGALQSTGPSNTELEPE). 2 stretches are compositionally biased toward polar residues: residues 202–212 (PLSSPKKNSGS) and 225–241 (RSQT…SNTE).

This is an uncharacterized protein from Homo sapiens (Human).